A 288-amino-acid chain; its full sequence is Aquaporin PIP1-5 (288 aa).

The disordered stretch occupies residues 1–36; the sequence is MEGKEEDVRLGANRYSERQPIGTAAQGTEEKDYKEP. The next 2 membrane-spanning stretches (helical) occupy residues 57-77 and 92-114; these read IAEF…VMGV and IAWS…SGGH. Residues 116–118 carry the NPA 1 motif; it reads NPA. Transmembrane regions (helical) follow at residues 135 to 155, 177 to 197, and 211 to 231; these read LFYM…VKGF, GDGL…VFSA, and ILAP…TIPI. The NPA 2 motif lies at 237 to 239; it reads NPA. A helical transmembrane segment spans residues 259-279; sequence IFWVGPFIGAALAAIYHVVII.

The protein belongs to the MIP/aquaporin (TC 1.A.8) family. PIP (TC 1.A.8.11) subfamily. Highly expressed in roots and at lower levels in anthers and silks.

The protein resides in the cell membrane. In terms of biological role, water channel required to facilitate the transport of water across cell membrane. The protein is Aquaporin PIP1-5 (PIP1-5) of Zea mays (Maize).